A 315-amino-acid chain; its full sequence is Trimethylguanosine synthase (315 aa).

The tract at residues 1–58 (MGRTFIHASKIKHAARKRKHHSNFRTLIKLLNNDAYKIESSKPLKNGKLFKYWKNRRR) is required for correct nucleolar localization. An S-adenosyl-L-methionine-binding site is contributed by Asp-126. The tract at residues 271–315 (TENSRRESSEKEELSSENEELSKRKKHESTTTTKDNTVDIYDVNG) is disordered. Over residues 273–284 (NSRRESSEKEEL) the composition is skewed to basic and acidic residues.

Belongs to the methyltransferase superfamily. Trimethylguanosine synthase family. In terms of assembly, monomer. Interacts with the spliceosomal snRNP core component SMB1 and the snoRNP components CBF5 and NOP58.

Its subcellular location is the nucleus. The protein localises to the nucleolus. The enzyme catalyses a 5'-end (N(7)-methyl 5'-triphosphoguanosine)-ribonucleoside in snRNA + S-adenosyl-L-methionine = a 5'-end (N(2),N(7)-dimethyl 5'-triphosphoguanosine)-ribonucleoside in snRNA + S-adenosyl-L-homocysteine + H(+). It catalyses the reaction a 5'-end (N(7)-methyl 5'-triphosphoguanosine)-ribonucleoside in snoRNA + S-adenosyl-L-methionine = a 5'-end (N(2),N(7)-dimethyl 5'-triphosphoguanosine)-ribonucleoside in snoRNA + S-adenosyl-L-homocysteine + H(+). It carries out the reaction a 5'-end (N(2),N(7)-dimethyl 5'-triphosphoguanosine)-ribonucleoside in snRNA + S-adenosyl-L-methionine = a 5'-end (N(2),N(2),N(7)-trimethyl 5'-triphosphoguanosine)-ribonucleoside in snRNA + S-adenosyl-L-homocysteine + H(+). The catalysed reaction is a 5'-end (N(2),N(7)-dimethyl 5'-triphosphoguanosine)-ribonucleoside in snoRNA + S-adenosyl-L-methionine = a 5'-end (N(2),N(2),N(7)-trimethyl 5'-triphosphoguanosine)-ribonucleoside in snoRNA + S-adenosyl-L-homocysteine + H(+). Substrate inhibited by S-adenosyl-L-homocysteine. In terms of biological role, catalyzes the two serial methylation steps for the conversion of the 7-monomethylguanosine (m(7)G) caps of snRNAs and snoRNAs to a 2,2,7-trimethylguanosine (m(2,2,7)G) cap structure. The enzyme is specific for guanine, and N7 methylation must precede N2 methylation. Hypermethylates the m3G cap on TLC1 telomerase which affects telomere silencing and telomere length regulation. Required for pre-mRNA splicing, pre-rRNA processing and small ribosomal subunit synthesis. Involved in nucleolar structural organization. This Saccharomyces cerevisiae (strain ATCC 204508 / S288c) (Baker's yeast) protein is Trimethylguanosine synthase (TGS1).